The chain runs to 161 residues: Phosphopantetheine adenylyltransferase (161 aa).

Ser9 contributes to the substrate binding site. ATP contacts are provided by residues 9-10 (SF) and His17. Lys41, Val73, and Lys87 together coordinate substrate. ATP is bound by residues 88 to 90 (GLR), Glu98, and 122 to 128 (YSFVSSS).

The protein belongs to the bacterial CoaD family. Homohexamer. Requires Mg(2+) as cofactor.

It is found in the cytoplasm. The enzyme catalyses (R)-4'-phosphopantetheine + ATP + H(+) = 3'-dephospho-CoA + diphosphate. Its pathway is cofactor biosynthesis; coenzyme A biosynthesis; CoA from (R)-pantothenate: step 4/5. Reversibly transfers an adenylyl group from ATP to 4'-phosphopantetheine, yielding dephospho-CoA (dPCoA) and pyrophosphate. In Mycobacterium bovis (strain ATCC BAA-935 / AF2122/97), this protein is Phosphopantetheine adenylyltransferase.